We begin with the raw amino-acid sequence, 90 residues long: Small ribosomal subunit protein bS6 (90 aa).

Lys-33 participates in a covalent cross-link: Isoglutamyl lysine isopeptide (Lys-Gln) (interchain with Q-Cter in protein Pup).

The protein belongs to the bacterial ribosomal protein bS6 family.

Binds together with bS18 to 16S ribosomal RNA. This Mycolicibacterium smegmatis (strain ATCC 700084 / mc(2)155) (Mycobacterium smegmatis) protein is Small ribosomal subunit protein bS6 (rpsF).